A 490-amino-acid polypeptide reads, in one-letter code: MSAIFEILDKDAGGRIGKLRTPHGIVETPTVMPVINPNIQLISPKEMKSFGAEILITNSYIIYRKEELRTVALEKGLHGLLGFDGPIMTDSGSFQLSVYGSVEVTNEEILGFQQKIGSDIIVPLDIPTPPDVHFRRAEEELAVTAERLEAARKFIQGEQLLAGPVQGSTYPELREKAASRLRDLNFEVYPLGAVVPLMEAYRYAELVDVIAASKKGLSPTSPVHLFGAGHPMMFALAVSLGCDLFDSAAYALYAKDGRYITANGTYHLEKLNYLPCSCPVCSKYTADELRKAKNKEELLGKHNLYATFAEIRLIKQSIKDGKLLELVEQRCRAHPKLLDGLKRLYTHSAWLEQFDPATKGTYFYCGPESSFRPEVLRFEKRLDRFSLEGSAIIRTAPVKGEKDYDRVLTFKAPFGSFPAEMEEVYPFNAEVPKFPDYETLSTALSNTLKLMELNPGAEFTFICEKEFEHPLIEEIGKKAKLVYRAAWKKE.

The active-site Nucleophile is the Asp-90. Substrate-binding residues include Asp-125 and Ala-193. Residues Cys-276, Cys-278, and Cys-281 each contribute to the Zn(2+) site.

The protein belongs to the archaeosine tRNA-ribosyltransferase family. The cofactor is Zn(2+).

It carries out the reaction guanosine(15) in tRNA + 7-cyano-7-deazaguanine = 7-cyano-7-carbaguanosine(15) in tRNA + guanine. Its pathway is tRNA modification; archaeosine-tRNA biosynthesis. Functionally, exchanges the guanine residue with 7-cyano-7-deazaguanine (preQ0) at position 15 in the dihydrouridine loop (D-loop) of archaeal tRNAs. The polypeptide is tRNA-guanine(15) transglycosylase (Methanosarcina acetivorans (strain ATCC 35395 / DSM 2834 / JCM 12185 / C2A)).